The sequence spans 326 residues: Biotin synthase (326 aa).

The 230-residue stretch at 50 to 279 (FNGEKVDVEQ…ESVIKISGGR (230 aa)) folds into the Radical SAM core domain. C68, C72, and C75 together coordinate [4Fe-4S] cluster. Residues C112, C145, C204, and K274 each contribute to the [2Fe-2S] cluster site.

This sequence belongs to the radical SAM superfamily. Biotin synthase family. In terms of assembly, homodimer. [4Fe-4S] cluster is required as a cofactor. It depends on [2Fe-2S] cluster as a cofactor.

It carries out the reaction (4R,5S)-dethiobiotin + (sulfur carrier)-SH + 2 reduced [2Fe-2S]-[ferredoxin] + 2 S-adenosyl-L-methionine = (sulfur carrier)-H + biotin + 2 5'-deoxyadenosine + 2 L-methionine + 2 oxidized [2Fe-2S]-[ferredoxin]. The protein operates within cofactor biosynthesis; biotin biosynthesis; biotin from 7,8-diaminononanoate: step 2/2. Its function is as follows. Catalyzes the conversion of dethiobiotin (DTB) to biotin by the insertion of a sulfur atom into dethiobiotin via a radical-based mechanism. The chain is Biotin synthase from Nitrosopumilus maritimus (strain SCM1).